The sequence spans 143 residues: UPF0201 protein Msed_1787 (143 aa).

This sequence belongs to the UPF0201 family.

In Metallosphaera sedula (strain ATCC 51363 / DSM 5348 / JCM 9185 / NBRC 15509 / TH2), this protein is UPF0201 protein Msed_1787.